Consider the following 893-residue polypeptide: Probable ion channel CASTOR (893 aa).

The interval 1 to 94 is disordered; that stretch reads MPLDPDSSPA…APRRRDPRYA (94 aa). Positions 65-85 are enriched in pro residues; it reads PLPPPEQQKQQQPPPTTPPPA. The chain crosses the membrane as a helical span at residues 132–152; the sequence is TLRWSGMVSVAAIVLCFSSLV. A coiled-coil region spans residues 156–178; the sequence is SSLHDQVHHLKAQLAEATTKLQS. 3 helical membrane-spanning segments follow: residues 210–230, 266–286, and 318–338; these read LLLS…MDLF, LVLL…LYGV, and LVSV…LGLV. RCK N-terminal domains are found at residues 359–500 and 619–792; these read QSHT…ETVV and PERI…DYVL. Residues 389–415 adopt a coiled-coil conformation; sequence TIVVMAEKDKEEMEADIAKMEFDLKGT.

The protein belongs to the castor/pollux (TC 1.A.1.23) family. Expressed in roots, leaves, stems and panicles.

The protein resides in the nucleus membrane. Its function is as follows. Required for mycorrhizal symbiosis. The sequence is that of Probable ion channel CASTOR from Oryza sativa subsp. japonica (Rice).